The following is a 351-amino-acid chain: Xaa-Pro dipeptidase (351 aa).

Asp212, Asp223, His287, Glu316, and Glu330 together coordinate Co(2+).

Belongs to the peptidase M24B family. Archaeal-type prolidase subfamily. Homodimer. It depends on Co(2+) as a cofactor.

The protein resides in the cytoplasm. It catalyses the reaction Xaa-L-Pro dipeptide + H2O = an L-alpha-amino acid + L-proline. In terms of biological role, splits dipeptides with a prolyl in the C-terminal position and a nonpolar amino acid at the N-terminal position. In Pyrococcus horikoshii (strain ATCC 700860 / DSM 12428 / JCM 9974 / NBRC 100139 / OT-3), this protein is Xaa-Pro dipeptidase (pepQ).